Consider the following 474-residue polypeptide: SHC-transforming protein 3 (474 aa).

The segment at 1 to 27 is disordered; the sequence is MSATRKSRAGDEPLPRPPRGAPHTSDQ. The PID domain maps to 29–214; sequence LGPGVTYVVK…LDEPWTEEEG (186 aa). The segment at 215-378 is CH1; that stretch reads DGPDHPYYNS…RMLEELNAEP (164 aa). Position 282 is a phosphoserine (S282). A disordered region spans residues 308–328; it reads QPVPPQVWPAATSSTESSPRK. An SH2 domain is found at 379–470; the sequence is WYQGEMSRKE…GSELCLQQPV (92 aa).

Interacts with the Trk receptors in a phosphotyrosine-dependent manner. Once activated, binds to GRB2. Interacts with activated EGF receptors. Post-translationally, tyrosine phosphorylated. Predominantly expressed in the adult brain.

Signaling adapter that couples activated growth factor receptors to signaling pathway in neurons. Involved in the signal transduction pathways of neurotrophin-activated Trk receptors in cortical neurons. The protein is SHC-transforming protein 3 (Shc3) of Mus musculus (Mouse).